The sequence spans 348 residues: Phenylalanine--tRNA ligase alpha subunit (348 aa).

Position 259 (Glu259) interacts with Mg(2+).

The protein belongs to the class-II aminoacyl-tRNA synthetase family. Phe-tRNA synthetase alpha subunit type 1 subfamily. In terms of assembly, tetramer of two alpha and two beta subunits. Mg(2+) is required as a cofactor.

The protein localises to the cytoplasm. It catalyses the reaction tRNA(Phe) + L-phenylalanine + ATP = L-phenylalanyl-tRNA(Phe) + AMP + diphosphate + H(+). This is Phenylalanine--tRNA ligase alpha subunit from Lactiplantibacillus plantarum (strain ATCC BAA-793 / NCIMB 8826 / WCFS1) (Lactobacillus plantarum).